Reading from the N-terminus, the 251-residue chain is CDP-diacylglycerol pyrophosphatase (251 aa).

The helical transmembrane segment at 5-25 (GYFLLAVIVIVAAAGVGYWKF) threads the bilayer.

This sequence belongs to the Cdh family.

It localises to the cell inner membrane. The enzyme catalyses a CDP-1,2-diacyl-sn-glycerol + H2O = a 1,2-diacyl-sn-glycero-3-phosphate + CMP + 2 H(+). It participates in phospholipid metabolism; CDP-diacylglycerol degradation; phosphatidate from CDP-diacylglycerol: step 1/1. The polypeptide is CDP-diacylglycerol pyrophosphatase (Salmonella typhi).